The sequence spans 644 residues: Threonine--tRNA ligase (644 aa).

A TGS domain is found at 1-61; that stretch reads MNVSIEGQML…DGTTTIEPVY (61 aa). The interval 241 to 532 is catalytic; that stretch reads DHRKLGQQLD…LIEQYAGAFP (292 aa). Zn(2+) is bound by residues Cys333, His384, and His509.

Belongs to the class-II aminoacyl-tRNA synthetase family. In terms of assembly, homodimer. The cofactor is Zn(2+).

The protein localises to the cytoplasm. The enzyme catalyses tRNA(Thr) + L-threonine + ATP = L-threonyl-tRNA(Thr) + AMP + diphosphate + H(+). Catalyzes the attachment of threonine to tRNA(Thr) in a two-step reaction: L-threonine is first activated by ATP to form Thr-AMP and then transferred to the acceptor end of tRNA(Thr). Also edits incorrectly charged L-seryl-tRNA(Thr). This chain is Threonine--tRNA ligase, found in Nitratidesulfovibrio vulgaris (strain ATCC 29579 / DSM 644 / CCUG 34227 / NCIMB 8303 / VKM B-1760 / Hildenborough) (Desulfovibrio vulgaris).